Here is a 308-residue protein sequence, read N- to C-terminus: 34.2 kDa protein in rubredoxin operon (308 aa).

Residues Cys136 and Cys139 are joined by a disulfide bond. Thr268–Asp278 contacts FAD.

The protein belongs to the class-II pyridine nucleotide-disulfide oxidoreductase family.

In Clostridium pasteurianum, this protein is 34.2 kDa protein in rubredoxin operon.